Here is a 696-residue protein sequence, read N- to C-terminus: DNA-directed RNA polymerase subunit beta' (696 aa).

Residues C76, C78, C94, and C97 each contribute to the Zn(2+) site. The Mg(2+) site is built by D496, D498, and D500.

The protein belongs to the RNA polymerase beta' chain family. RpoC1 subfamily. In plastids the minimal PEP RNA polymerase catalytic core is composed of four subunits: alpha, beta, beta', and beta''. When a (nuclear-encoded) sigma factor is associated with the core the holoenzyme is formed, which can initiate transcription. It depends on Mg(2+) as a cofactor. Zn(2+) is required as a cofactor.

Its subcellular location is the plastid. The protein resides in the chloroplast. It carries out the reaction RNA(n) + a ribonucleoside 5'-triphosphate = RNA(n+1) + diphosphate. Functionally, DNA-dependent RNA polymerase catalyzes the transcription of DNA into RNA using the four ribonucleoside triphosphates as substrates. This is DNA-directed RNA polymerase subunit beta' from Guizotia abyssinica (Niger).